Here is a 157-residue protein sequence, read N- to C-terminus: Small ribosomal subunit protein uS7 (157 aa).

It belongs to the universal ribosomal protein uS7 family. Part of the 30S ribosomal subunit. Contacts proteins S9 and S11.

In terms of biological role, one of the primary rRNA binding proteins, it binds directly to 16S rRNA where it nucleates assembly of the head domain of the 30S subunit. Is located at the subunit interface close to the decoding center, probably blocks exit of the E-site tRNA. The sequence is that of Small ribosomal subunit protein uS7 from Borrelia hermsii (strain HS1 / DAH).